The sequence spans 494 residues: Ketol-acid reductoisomerase (NADP(+)) (494 aa).

In terms of domain architecture, KARI N-terminal Rossmann spans 14 to 208 (LDQLGRCRFM…GGHRAGCLES (195 aa)). Residues 45 to 48 (CGAQ), R68, R76, S78, and 108 to 110 (DKQ) contribute to the NADP(+) site. Residue H132 is part of the active site. G158 is a binding site for NADP(+). KARI C-terminal knotted domains lie at 209–344 (SFVA…NYPE) and 345–487 (TDVE…MTDM). Residues D217, E221, E389, and E393 each coordinate Mg(2+). S414 lines the substrate pocket.

Belongs to the ketol-acid reductoisomerase family. Mg(2+) is required as a cofactor.

It catalyses the reaction (2R)-2,3-dihydroxy-3-methylbutanoate + NADP(+) = (2S)-2-acetolactate + NADPH + H(+). It carries out the reaction (2R,3R)-2,3-dihydroxy-3-methylpentanoate + NADP(+) = (S)-2-ethyl-2-hydroxy-3-oxobutanoate + NADPH + H(+). The protein operates within amino-acid biosynthesis; L-isoleucine biosynthesis; L-isoleucine from 2-oxobutanoate: step 2/4. It participates in amino-acid biosynthesis; L-valine biosynthesis; L-valine from pyruvate: step 2/4. Functionally, involved in the biosynthesis of branched-chain amino acids (BCAA). Catalyzes an alkyl-migration followed by a ketol-acid reduction of (S)-2-acetolactate (S2AL) to yield (R)-2,3-dihydroxy-isovalerate. In the isomerase reaction, S2AL is rearranged via a Mg-dependent methyl migration to produce 3-hydroxy-3-methyl-2-ketobutyrate (HMKB). In the reductase reaction, this 2-ketoacid undergoes a metal-dependent reduction by NADPH to yield (R)-2,3-dihydroxy-isovalerate. The polypeptide is Ketol-acid reductoisomerase (NADP(+)) (Vibrio parahaemolyticus serotype O3:K6 (strain RIMD 2210633)).